The primary structure comprises 107 residues: Putative protein RFPL3S (107 aa).

In terms of tissue distribution, strongly expressed in the testis and weakly in brain, placenta and pancreas.

The chain is Putative protein RFPL3S (RFPL3S) from Homo sapiens (Human).